We begin with the raw amino-acid sequence, 283 residues long: Xyloglucan endotransglucosylase/hydrolase 2 (283 aa).

Positions 1-30 (MAPSSAHNNGFYVLMLVGIVVSTMVATCAG) are cleaved as a signal peptide. A GH16 domain is found at 31–220 (SFYQDFDLTW…WSKAPFTAYY (190 aa)). The active-site Nucleophile is glutamate 106. Glutamate 110 (proton donor) is an active-site residue. Glutamate 110 lines the xyloglucan pocket. An N-linked (GlcNAc...) asparagine glycan is attached at asparagine 114. Residues 123 to 125 (HTN), 133 to 135 (NRE), 199 to 200 (DW), glycine 204, and arginine 272 contribute to the xyloglucan site. Residues cysteine 267 and cysteine 281 are joined by a disulfide bond.

This sequence belongs to the glycosyl hydrolase 16 family. Contains at least one intrachain disulfide bond essential for its enzymatic activity. Post-translationally, N-glycosylated; not essential for its enzymatic activity.

It is found in the secreted. The protein resides in the cell wall. Its subcellular location is the extracellular space. It localises to the apoplast. The enzyme catalyses breaks a beta-(1-&gt;4) bond in the backbone of a xyloglucan and transfers the xyloglucanyl segment on to O-4 of the non-reducing terminal glucose residue of an acceptor, which can be a xyloglucan or an oligosaccharide of xyloglucan.. Its function is as follows. Catalyzes xyloglucan endohydrolysis (XEH) and/or endotransglycosylation (XET). Cleaves and religates xyloglucan polymers, an essential constituent of the primary cell wall, and thereby participates in cell wall construction of growing tissues. The protein is Xyloglucan endotransglucosylase/hydrolase 2 of Glycine max (Soybean).